The chain runs to 162 residues: SCF ubiquitin ligase complex protein SKP1a (162 aa).

An N-acetylserine modification is found at serine 2. Residues isoleucine 100–asparagine 162 form an interaction with the F-box domain of F-box proteins region. Proline 143 is modified (4-hydroxyproline). Residue proline 143 is glycosylated (O-linked (GlcNAc...) hydroxyproline).

This sequence belongs to the SKP1 family. As to quaternary structure, multiprotein complex (SCF) with cullin and F-box-containing protein. Capable of undergoing aggregation. In terms of processing, O-linked glycan consists of linear Gal-Gal-Fuc-Gal-GlcNAc. Post-translationally, fpaA and fpaB seem to be identically glycosylated. Glycosylation is required for nuclear enrichment. Hydroxylated by phyA.

The protein resides in the cytoplasm. The protein localises to the nucleus. This Dictyostelium discoideum (Social amoeba) protein is SCF ubiquitin ligase complex protein SKP1a (fpaA).